A 210-amino-acid polypeptide reads, in one-letter code: Small ribosomal subunit protein uS7 (210 aa).

This sequence belongs to the universal ribosomal protein uS7 family. In terms of assembly, component of the small ribosomal subunit. Part of the small subunit (SSU) processome, composed of more than 70 proteins and the RNA chaperone small nucleolar RNA (snoRNA) U3.

Its subcellular location is the cytoplasm. The protein localises to the nucleus. The protein resides in the nucleolus. Component of the small ribosomal subunit. The ribosome is a large ribonucleoprotein complex responsible for the synthesis of proteins in the cell. Part of the small subunit (SSU) processome, first precursor of the small eukaryotic ribosomal subunit. During the assembly of the SSU processome in the nucleolus, many ribosome biogenesis factors, an RNA chaperone and ribosomal proteins associate with the nascent pre-rRNA and work in concert to generate RNA folding, modifications, rearrangements and cleavage as well as targeted degradation of pre-ribosomal RNA by the RNA exosome. This Caenorhabditis elegans protein is Small ribosomal subunit protein uS7 (rps-5).